A 131-amino-acid polypeptide reads, in one-letter code: Large ribosomal subunit protein bL17 (131 aa).

This sequence belongs to the bacterial ribosomal protein bL17 family. In terms of assembly, part of the 50S ribosomal subunit. Contacts protein L32.

In Shewanella baltica (strain OS223), this protein is Large ribosomal subunit protein bL17.